The sequence spans 253 residues: Probable transcriptional regulatory protein Krad_3057 (253 aa).

Belongs to the TACO1 family.

It is found in the cytoplasm. The sequence is that of Probable transcriptional regulatory protein Krad_3057 from Kineococcus radiotolerans (strain ATCC BAA-149 / DSM 14245 / SRS30216).